Consider the following 547-residue polypeptide: Chaperonin GroEL 3 (547 aa).

Residues 30–33, lysine 51, 87–91, glycine 415, and aspartate 496 contribute to the ATP site; these read TLGP and DGTTT.

Belongs to the chaperonin (HSP60) family. Forms a cylinder of 14 subunits composed of two heptameric rings stacked back-to-back. Interacts with the co-chaperonin GroES.

It localises to the cytoplasm. It carries out the reaction ATP + H2O + a folded polypeptide = ADP + phosphate + an unfolded polypeptide.. Functionally, together with its co-chaperonin GroES, plays an essential role in assisting protein folding. The GroEL-GroES system forms a nano-cage that allows encapsulation of the non-native substrate proteins and provides a physical environment optimized to promote and accelerate protein folding. In Bradyrhizobium sp. (strain ORS 278), this protein is Chaperonin GroEL 3.